A 2924-amino-acid polypeptide reads, in one-letter code: Zinc finger ZZ-type and EF-hand domain-containing protein 1 (2924 aa).

Residues 1 to 41 (MGNAPSNSSEDEAAAAGGEGWSPHQDWAADSGTTPGPGPAA) form a disordered region. Residue glycine 2 is the site of N-myristoyl glycine attachment. A compositionally biased stretch (low complexity) spans 28-41 (AADSGTTPGPGPAA). The region spanning 111–146 (CSGEQFEEAFAQFDAEGDGTVDAENMLEALKNSSGA) is the EF-hand domain. The DOC domain maps to 226–405 (LVQKEKESPG…AIWYWSLLTS (180 aa)). Serine 240 is modified (phosphoserine). The segment covering 1452–1470 (HLQPLDRRQRTSSVVEEHF) has biased composition (basic and acidic residues). A disordered region spans residues 1452 to 1527 (HLQPLDRRQR…STPTRRPPFT (76 aa)). Residues 1472–1485 (GSASPTEAATPAAG) show a composition bias toward low complexity. A phosphoserine mark is found at serine 1475, serine 1488, and serine 1509. Position 1510 is a phosphothreonine (threonine 1510). Residues 1514-1523 (PSPPSTPTRR) show a composition bias toward pro residues. The residue at position 1515 (serine 1515) is a Phosphoserine. Phosphothreonine is present on residues threonine 1519 and threonine 1521. 2 positions are modified to phosphoserine: serine 1535 and serine 1538. 2 consecutive ZZ-type zinc fingers follow at residues 1776 to 1831 (NVDI…FTCD) and 1825 to 1880 (NMEF…MVTI). Residues cysteine 1781, cysteine 1784, cysteine 1795, cysteine 1798, cysteine 1804, cysteine 1807, histidine 1817, histidine 1821, cysteine 1830, cysteine 1833, cysteine 1844, cysteine 1847, cysteine 1853, cysteine 1856, histidine 1866, and histidine 1870 each contribute to the Zn(2+) site. Residues 2388 to 2418 (DLELDERGDQEEELDRPVSSPGEAEQKKLDP) are disordered. Serine 2407 is modified (phosphoserine). Lysine 2630 bears the N6-acetyllysine mark.

In terms of assembly, interacts with KLF6 and KLF9. Interacts via (ZZ-type 2 zinc finger) with histone H3 trimethylated at 'Lys-4' (H3K4me3) and histone H3 acetylated at 'Lys-4' (H3K4ac).

Histone H3 reader which may act as a transcriptional coactivator for KLF6 and KLF9 transcription factors. The sequence is that of Zinc finger ZZ-type and EF-hand domain-containing protein 1 (Zzef1) from Mus musculus (Mouse).